We begin with the raw amino-acid sequence, 114 residues long: DNA-directed RNA polymerase subunit omega (114 aa).

The protein belongs to the RNA polymerase subunit omega family. In terms of assembly, the RNAP catalytic core consists of 2 alpha, 1 beta, 1 beta' and 1 omega subunit. When a sigma factor is associated with the core the holoenzyme is formed, which can initiate transcription.

It carries out the reaction RNA(n) + a ribonucleoside 5'-triphosphate = RNA(n+1) + diphosphate. Its function is as follows. Promotes RNA polymerase assembly. Latches the N- and C-terminal regions of the beta' subunit thereby facilitating its interaction with the beta and alpha subunits. The sequence is that of DNA-directed RNA polymerase subunit omega from Erythrobacter litoralis (strain HTCC2594).